Reading from the N-terminus, the 416-residue chain is Calreticulin (416 aa).

Positions 1–17 are cleaved as a signal peptide; that stretch reads MLLSVPLLLGLLGLAAA. Positions 18 to 197 are N-domain; that stretch reads DPAIYFKEQF…NSQVESGSLE (180 aa). Gln26 serves as a coordination point for Ca(2+). The residue at position 48 (Lys48) is an N6-acetyllysine. The Ca(2+) site is built by Lys62 and Lys64. Position 64 is an N6-(2-hydroxyisobutyryl)lysine (Lys64). The cysteines at positions 105 and 137 are disulfide-linked. The an alpha-D-glucoside site is built by Tyr109, Lys111, Tyr128, and Asp135. Lys159 carries the N6-acetyllysine modification. Residues 191 to 202 form a 1-1 repeat; that stretch reads VESGSLEDDWDF. Residues 191-255 are 4 X approximate repeats; that stretch reads VESGSLEDDW…DAKKPEDWDE (65 aa). Residues 193–277 are disordered; sequence SGSLEDDWDF…NPEYKGEWKP (85 aa). Residues 198 to 308 form a P-domain region; sequence DDWDFLPPKK…YSPDANIYAY (111 aa). Over residues 207–251 the composition is skewed to basic and acidic residues; sequence KIKDPDAAKPEDWDERAKIDDPTDSKPEDWDKPEHIPDPDAKKPE. At Lys209 the chain carries N6-acetyllysine. 6 repeat units span residues 210 to 221, 227 to 238, 244 to 255, 259 to 269, 273 to 283, and 287 to 297. An interaction with PPIB region spans residues 237 to 270; it reads DKPEHIPDPDAKKPEDWDEEMDGEWEPPVIQNPE. The span at 252-261 shows a compositional bias: acidic residues; the sequence is DWDEEMDGEW. A 3 X approximate repeats region spans residues 259-297; sequence GEWEPPVIQNPEYKGEWKPRQIDNPDYKGTWIHPEIDNP. Residues 309-416 are C-domain; the sequence is DSFAVLGLDL…ESPGQAKDEL (108 aa). Residue Asp317 participates in an alpha-D-glucoside binding. Asp328 serves as a coordination point for Ca(2+). The disordered stretch occupies residues 350–416; that stretch reads TKAAEKQMKD…ESPGQAKDEL (67 aa). The span at 352–379 shows a compositional bias: basic and acidic residues; sequence AAEKQMKDKQDEEQRLKEEEEDKKRKEE. Residues 380–408 show a composition bias toward acidic residues; it reads EEAEDKEDDDDRDEDEDEEDEKEEDEEES. The Prevents secretion from ER motif lies at 413–416; it reads KDEL.

The protein belongs to the calreticulin family. As to quaternary structure, monomer. Interacts with GABARAP, NR3C1, PDIA3/ERp57 and TRIM21. Interacts (via P-domain) with PDIA5. Interacts with PPIB. Interacts with SPACA9. Component of an EIF2 complex at least composed of CELF1/CUGBP1, CALR, CALR3, EIF2S1, EIF2S2, HSP90B1 and HSPA5. Interacts with CLCC1.

It is found in the endoplasmic reticulum lumen. The protein localises to the cytoplasm. It localises to the cytosol. Its subcellular location is the cytolytic granule. The protein resides in the secreted. It is found in the extracellular space. The protein localises to the extracellular matrix. It localises to the cell surface. Its subcellular location is the sarcoplasmic reticulum lumen. The protein resides in the cytoplasmic vesicle. It is found in the secretory vesicle. The protein localises to the cortical granule. Calcium-binding chaperone that promotes folding, oligomeric assembly and quality control in the endoplasmic reticulum (ER) via the calreticulin/calnexin cycle. This lectin interacts transiently with almost all of the monoglucosylated glycoproteins that are synthesized in the ER. Interacts with the DNA-binding domain of NR3C1 and mediates its nuclear export. Involved in maternal gene expression regulation. May participate in oocyte maturation via the regulation of calcium homeostasis. Present in the cortical granules of non-activated oocytes, is exocytosed during the cortical reaction in response to oocyte activation and might participate in the block to polyspermy. In Mus musculus (Mouse), this protein is Calreticulin (Calr).